The primary structure comprises 384 residues: Kinesin-like protein KIF25 (384 aa).

The tract at residues 1-20 is disordered; it reads MTWTSGQLQREKQARPGSGA. The Kinesin motor domain maps to 7-363; the sequence is QLQREKQARP…LGFGIRARQV (357 aa). 65–72 is an ATP binding site; the sequence is GQTGSGKS. Disordered stretches follow at residues 217-256 and 362-384; these read DQACSATLPREQTEAGRAGRSRRASQGALAPQLVPGNPAG and QVQRGPARKKPPSSQTEGKRRPD.

The protein belongs to the TRAFAC class myosin-kinesin ATPase superfamily. Kinesin family. In terms of assembly, homotetramer.

Its subcellular location is the cytoplasm. The protein resides in the cytoskeleton. The protein localises to the microtubule organizing center. It localises to the centrosome. Minus-end microtubule-dependent motor protein. Acts as a negative regulator of centrosome separation required to prevent premature centrosome separation during interphase. Required to maintain a centered nucleus to ensure that the spindle is stably oriented at the onset of mitosis. May also act as a negative regulator of amino acid starvation-induced autophagy. The polypeptide is Kinesin-like protein KIF25 (Homo sapiens (Human)).